A 517-amino-acid polypeptide reads, in one-letter code: MIDLTVARVTEIVGGALVDISPEEAAERRVTGSVEFDSRAVGPGGLFLALPGARSDGHDHAASAIAAGAVAVLAARPVGVPAIVVAPDPRTGDGGLTGVLEHDADGSGAAVLAALAKLAKAVAAELVAGGLTIIGITGSSGKTSTKDLVAVVLELLGEVVAPPESFNNELGHPWTVLRATRSTDYLILEMSARRPGNIAALAAIAPPKIGVVLNVGTAHLGEFGSREAIARTKTELPQAIMQSGVVILNVDDPAVAAMADATVARVIRVSRGSYSHPGSPNSPDVWTGPVSLDELARPRFTLHTRDPRAGATEIQLGVYGDHQVANALCAAAVGLECGASVEEVAVALAATGPVSRHRMQVTTRADGVTVIDDTYNANPDSMRAGLQALAWIAHGGTHDKNQPGSCARRSWAVLGEMAELGEDSITEHDRIGRLAVRLDVSRLVVVGGGRSINAMHRGAVMEGSWGLETVNVADPAAALTLLRAEVRPGDVVLIKASHSVGLGALADVLVGDGAIRP.

138–144 (GSSGKTS) contacts ATP.

This sequence belongs to the MurCDEF family. MurF subfamily.

The protein resides in the cytoplasm. The enzyme catalyses D-alanyl-D-alanine + UDP-N-acetyl-alpha-D-muramoyl-L-alanyl-gamma-D-glutamyl-meso-2,6-diaminopimelate + ATP = UDP-N-acetyl-alpha-D-muramoyl-L-alanyl-gamma-D-glutamyl-meso-2,6-diaminopimeloyl-D-alanyl-D-alanine + ADP + phosphate + H(+). It participates in cell wall biogenesis; peptidoglycan biosynthesis. In terms of biological role, involved in cell wall formation. Catalyzes the final step in the synthesis of UDP-N-acetylmuramoyl-pentapeptide, the precursor of murein. In Mycobacterium leprae (strain TN), this protein is UDP-N-acetylmuramoyl-tripeptide--D-alanyl-D-alanine ligase.